Reading from the N-terminus, the 375-residue chain is Ribosomal RNA large subunit methyltransferase G (375 aa).

Belongs to the methyltransferase superfamily. RlmG family.

Its subcellular location is the cytoplasm. The catalysed reaction is guanosine(1835) in 23S rRNA + S-adenosyl-L-methionine = N(2)-methylguanosine(1835) in 23S rRNA + S-adenosyl-L-homocysteine + H(+). In terms of biological role, specifically methylates the guanine in position 1835 (m2G1835) of 23S rRNA. This chain is Ribosomal RNA large subunit methyltransferase G, found in Stutzerimonas stutzeri (strain A1501) (Pseudomonas stutzeri).